Reading from the N-terminus, the 382-residue chain is 2-epi-valiolone synthase (382 aa).

Residues 92–95, 124–128, 148–149, lysine 161, lysine 170, and 188–191 each bind NAD(+); these read EKSK, GVVVD, TT, and HLRT. Zn(2+)-binding residues include glutamate 203, histidine 266, and histidine 283.

Belongs to the sugar phosphate cyclases superfamily. EVS family. NAD(+) serves as cofactor. It depends on Co(2+) as a cofactor. Requires Zn(2+) as cofactor.

It catalyses the reaction D-sedoheptulose 7-phosphate = 2-epi-valiolone + phosphate. Its function is as follows. Catalyzes the conversion of sedoheptulose 7-phosphate to 2-epi-valiolone, which may serve as an alternative precursor for aminocyclitol biosynthesis. The polypeptide is 2-epi-valiolone synthase (Actinosynnema mirum (strain ATCC 29888 / DSM 43827 / JCM 3225 / NBRC 14064 / NCIMB 13271 / NRRL B-12336 / IMRU 3971 / 101)).